The primary structure comprises 183 residues: Threonylcarbamoyl-AMP synthase (183 aa).

The YrdC-like domain maps to 1-183; sequence MNREQIAEAL…LRTNQLFRQG (183 aa).

The protein belongs to the SUA5 family. TsaC subfamily.

Its subcellular location is the cytoplasm. The catalysed reaction is L-threonine + hydrogencarbonate + ATP = L-threonylcarbamoyladenylate + diphosphate + H2O. Functionally, required for the formation of a threonylcarbamoyl group on adenosine at position 37 (t(6)A37) in tRNAs that read codons beginning with adenine. Catalyzes the conversion of L-threonine, HCO(3)(-)/CO(2) and ATP to give threonylcarbamoyl-AMP (TC-AMP) as the acyladenylate intermediate, with the release of diphosphate. The polypeptide is Threonylcarbamoyl-AMP synthase (Haemophilus influenzae (strain 86-028NP)).